Consider the following 164-residue polypeptide: uncharacterized protein (164 aa).

2 helical membrane-spanning segments follow: residues 11-31 (FYVN…PSLL) and 51-71 (CQQY…LVLV).

It localises to the membrane. This is an uncharacterized protein from Saccharomyces cerevisiae (strain ATCC 204508 / S288c) (Baker's yeast).